A 75-amino-acid polypeptide reads, in one-letter code: Putative defensin-like protein 119 (75 aa).

The first 25 residues, 1-25 (MAKSTIFAIFMIVFVLGMVTKETKG), serve as a signal peptide directing secretion. 4 disulfides stabilise this stretch: Cys29-Cys73, Cys39-Cys58, Cys44-Cys67, and Cys48-Cys69.

This sequence belongs to the DEFL family.

The protein resides in the secreted. This Arabidopsis thaliana (Mouse-ear cress) protein is Putative defensin-like protein 119 (LCR53).